A 449-amino-acid polypeptide reads, in one-letter code: Phosphoglucosamine mutase (449 aa).

S104 functions as the Phosphoserine intermediate in the catalytic mechanism. Mg(2+) is bound by residues S104, D243, D245, and D247. Position 104 is a phosphoserine (S104).

This sequence belongs to the phosphohexose mutase family. It depends on Mg(2+) as a cofactor. Activated by phosphorylation.

It carries out the reaction alpha-D-glucosamine 1-phosphate = D-glucosamine 6-phosphate. Functionally, catalyzes the conversion of glucosamine-6-phosphate to glucosamine-1-phosphate. This Xanthomonas oryzae pv. oryzae (strain PXO99A) protein is Phosphoglucosamine mutase.